A 283-amino-acid chain; its full sequence is Pyridoxine/pyridoxal/pyridoxamine kinase (283 aa).

Residues S23 and H59 each coordinate substrate. Position 125 (D125) interacts with ATP. Y136 lines the Mg(2+) pocket. Residues T157, E162, T195, 222–225, and T232 contribute to the ATP site; that span reads HAHV. E162 is a Mg(2+) binding site. D234 contacts substrate.

The protein belongs to the pyridoxine kinase family. PdxK subfamily. As to quaternary structure, homodimer. Mg(2+) serves as cofactor.

It catalyses the reaction pyridoxal + ATP = pyridoxal 5'-phosphate + ADP + H(+). The catalysed reaction is pyridoxine + ATP = pyridoxine 5'-phosphate + ADP + H(+). It carries out the reaction pyridoxamine + ATP = pyridoxamine 5'-phosphate + ADP + H(+). It participates in cofactor metabolism; pyridoxal 5'-phosphate salvage; pyridoxal 5'-phosphate from pyridoxal: step 1/1. Its pathway is cofactor metabolism; pyridoxal 5'-phosphate salvage; pyridoxine 5'-phosphate from pyridoxine: step 1/1. It functions in the pathway cofactor metabolism; pyridoxal 5'-phosphate salvage; pyridoxamine 5'-phosphate from pyridoxamine: step 1/1. Its function is as follows. B6-vitamer kinase involved in the salvage pathway of pyridoxal 5'-phosphate (PLP). Catalyzes the phosphorylation of pyridoxine (PN), pyridoxal (PL), and pyridoxamine (PM), forming their respective 5'-phosphorylated esters, i.e. PNP, PLP and PMP. The protein is Pyridoxine/pyridoxal/pyridoxamine kinase of Bordetella pertussis (strain Tohama I / ATCC BAA-589 / NCTC 13251).